The primary structure comprises 208 residues: Thymidylate kinase (208 aa).

ATP is bound at residue 11-18 (GIEGAGKT).

This sequence belongs to the thymidylate kinase family.

The enzyme catalyses dTMP + ATP = dTDP + ADP. Its function is as follows. Phosphorylation of dTMP to form dTDP in both de novo and salvage pathways of dTTP synthesis. This Hahella chejuensis (strain KCTC 2396) protein is Thymidylate kinase.